Here is a 196-residue protein sequence, read N- to C-terminus: MAGSPEPKSMREQFWDPIAGFGVTFRTMFKKVVTEQYPFDKYPTAPRFHGRHQLNRWPDGLEKCVGCELCAWACPADAIYVEGASNSDDPDGGERFSPGERYGRVYQINYLRCILCGLCIEACPTRALTMTNEYELADDNRADLIYEKSDLLAPLLPGMEQPPHPMRLGDDEGAYYRGEFAAPAPTAPGSSTEAGA.

4Fe-4S ferredoxin-type domains follow at residues Leu54–Ala84 and Arg104–Glu133. 8 residues coordinate [4Fe-4S] cluster: Cys64, Cys67, Cys70, Cys74, Cys113, Cys116, Cys119, and Cys123.

The protein belongs to the complex I 23 kDa subunit family. In terms of assembly, NDH-1 is composed of 14 different subunits. Subunits NuoA, H, J, K, L, M, N constitute the membrane sector of the complex. The cofactor is [4Fe-4S] cluster.

It localises to the cell membrane. It carries out the reaction a quinone + NADH + 5 H(+)(in) = a quinol + NAD(+) + 4 H(+)(out). NDH-1 shuttles electrons from NADH, via FMN and iron-sulfur (Fe-S) centers, to quinones in the respiratory chain. The immediate electron acceptor for the enzyme in this species is believed to be ubiquinone. Couples the redox reaction to proton translocation (for every two electrons transferred, four hydrogen ions are translocated across the cytoplasmic membrane), and thus conserves the redox energy in a proton gradient. This chain is NADH-quinone oxidoreductase subunit I, found in Nocardioides sp. (strain ATCC BAA-499 / JS614).